Consider the following 166-residue polypeptide: Ribosome maturation factor RimM (166 aa).

A PRC barrel domain is found at 90-165 (NDNDAFSIFY…IITLKNIEGL (76 aa)).

It belongs to the RimM family. As to quaternary structure, binds ribosomal protein uS19.

It is found in the cytoplasm. In terms of biological role, an accessory protein needed during the final step in the assembly of 30S ribosomal subunit, possibly for assembly of the head region. Essential for efficient processing of 16S rRNA. May be needed both before and after RbfA during the maturation of 16S rRNA. It has affinity for free ribosomal 30S subunits but not for 70S ribosomes. This Mesoplasma florum (strain ATCC 33453 / NBRC 100688 / NCTC 11704 / L1) (Acholeplasma florum) protein is Ribosome maturation factor RimM.